Here is a 158-residue protein sequence, read N- to C-terminus: Ribosome maturation factor RimP (158 aa).

This sequence belongs to the RimP family.

It is found in the cytoplasm. Functionally, required for maturation of 30S ribosomal subunits. The protein is Ribosome maturation factor RimP of Streptococcus suis (strain 05ZYH33).